We begin with the raw amino-acid sequence, 162 residues long: Class I hydrophobin 3 (162 aa).

2 disulfide bridges follow: C36/C150 and C151/C159.

This sequence belongs to the fungal hydrophobin family. As to quaternary structure, self-assembles to form functional amyloid fibrils called rodlets. Self-assembly into fibrillar rodlets occurs spontaneously at hydrophobic:hydrophilic interfaces and the rodlets further associate laterally to form amphipathic monolayers.

The protein localises to the secreted. Its subcellular location is the cell wall. In terms of biological role, aerial growth, conidiation, and dispersal of filamentous fungi in the environment rely upon a capability of their secreting small amphipathic proteins called hydrophobins (HPBs) with low sequence identity. Class I can self-assemble into an outermost layer of rodlet bundles on aerial cell surfaces, conferring cellular hydrophobicity that supports fungal growth, development and dispersal; whereas Class II form highly ordered films at water-air interfaces through intermolecular interactions but contribute nothing to the rodlet structure. This is Class I hydrophobin 3 from Coprinopsis cinerea (strain Okayama-7 / 130 / ATCC MYA-4618 / FGSC 9003) (Inky cap fungus).